Consider the following 456-residue polypeptide: tRNA modification GTPase MnmE (456 aa).

(6S)-5-formyl-5,6,7,8-tetrahydrofolate-binding residues include Arg23, Glu85, and Arg124. One can recognise a TrmE-type G domain in the interval 220 to 375; the sequence is GLRVLIFGKP…LVSAIQERFV (156 aa). Position 230 (Asn230) interacts with K(+). Residues 230-235, 249-255, and 274-277 contribute to the GTP site; these read NVGKSS, TDIPGTT, and DTAG. Ser234 contacts Mg(2+). Residues Thr249, Ile251, and Thr254 each coordinate K(+). Thr255 provides a ligand contact to Mg(2+). Position 456 (Lys456) interacts with (6S)-5-formyl-5,6,7,8-tetrahydrofolate.

The protein belongs to the TRAFAC class TrmE-Era-EngA-EngB-Septin-like GTPase superfamily. TrmE GTPase family. As to quaternary structure, homodimer. Heterotetramer of two MnmE and two MnmG subunits. K(+) serves as cofactor.

The protein localises to the cytoplasm. Exhibits a very high intrinsic GTPase hydrolysis rate. Involved in the addition of a carboxymethylaminomethyl (cmnm) group at the wobble position (U34) of certain tRNAs, forming tRNA-cmnm(5)s(2)U34. The protein is tRNA modification GTPase MnmE of Syntrophotalea carbinolica (strain DSM 2380 / NBRC 103641 / GraBd1) (Pelobacter carbinolicus).